A 1446-amino-acid chain; its full sequence is DNA-directed RNA polymerase subunit beta'' (1446 aa).

Cysteine 217, cysteine 285, cysteine 292, and cysteine 295 together coordinate Zn(2+).

This sequence belongs to the RNA polymerase beta' chain family. RpoC2 subfamily. As to quaternary structure, in plastids the minimal PEP RNA polymerase catalytic core is composed of four subunits: alpha, beta, beta', and beta''. When a (nuclear-encoded) sigma factor is associated with the core the holoenzyme is formed, which can initiate transcription. The cofactor is Zn(2+).

The protein localises to the plastid. The protein resides in the chloroplast. The catalysed reaction is RNA(n) + a ribonucleoside 5'-triphosphate = RNA(n+1) + diphosphate. Functionally, DNA-dependent RNA polymerase catalyzes the transcription of DNA into RNA using the four ribonucleoside triphosphates as substrates. The chain is DNA-directed RNA polymerase subunit beta'' from Thalassiosira pseudonana (Marine diatom).